The sequence spans 467 residues: Fumarate hydratase class II (467 aa).

Substrate is bound by residues 98 to 100 (SGT), Arg126, 129 to 132 (HPND), 139 to 141 (SSN), and Thr187. Catalysis depends on His188, which acts as the Proton donor/acceptor. Ser318 is a catalytic residue. Substrate is bound by residues Ser319 and 324–326 (KVN).

This sequence belongs to the class-II fumarase/aspartase family. Fumarase subfamily. Homotetramer.

The protein resides in the cytoplasm. The enzyme catalyses (S)-malate = fumarate + H2O. It functions in the pathway carbohydrate metabolism; tricarboxylic acid cycle; (S)-malate from fumarate: step 1/1. Functionally, involved in the TCA cycle. Catalyzes the stereospecific interconversion of fumarate to L-malate. This chain is Fumarate hydratase class II, found in Salmonella typhimurium (strain LT2 / SGSC1412 / ATCC 700720).